Reading from the N-terminus, the 387-residue chain is Galactokinase (387 aa).

33–36 (EHID) contacts substrate. Residues S67 and 124 to 130 (GAGLSSS) each bind ATP. Mg(2+) is bound by residues S130 and E162. D174 serves as the catalytic Proton acceptor. Residue Y224 participates in substrate binding.

Belongs to the GHMP kinase family. GalK subfamily.

It is found in the cytoplasm. The catalysed reaction is alpha-D-galactose + ATP = alpha-D-galactose 1-phosphate + ADP + H(+). It participates in carbohydrate metabolism; galactose metabolism. Functionally, catalyzes the transfer of the gamma-phosphate of ATP to D-galactose to form alpha-D-galactose-1-phosphate (Gal-1-P). This chain is Galactokinase, found in Clostridium perfringens (strain 13 / Type A).